A 156-amino-acid chain; its full sequence is Cyanate hydratase (156 aa).

Active-site residues include R96, E99, and S122.

The protein belongs to the cyanase family.

It catalyses the reaction cyanate + hydrogencarbonate + 3 H(+) = NH4(+) + 2 CO2. Its function is as follows. Catalyzes the reaction of cyanate with bicarbonate to produce ammonia and carbon dioxide. The sequence is that of Cyanate hydratase from Burkholderia mallei (strain NCTC 10247).